The chain runs to 145 residues: ATP synthase epsilon chain (145 aa).

This sequence belongs to the ATPase epsilon chain family. As to quaternary structure, F-type ATPases have 2 components, CF(1) - the catalytic core - and CF(0) - the membrane proton channel. CF(1) has five subunits: alpha(3), beta(3), gamma(1), delta(1), epsilon(1). CF(0) has three main subunits: a, b and c.

The protein resides in the cell inner membrane. Functionally, produces ATP from ADP in the presence of a proton gradient across the membrane. This is ATP synthase epsilon chain from Francisella tularensis subsp. mediasiatica (strain FSC147).